A 362-amino-acid polypeptide reads, in one-letter code: Large ribosomal subunit protein uL3 (362 aa).

Positions 340 to 362 (RPPKKKPPVQRPQITYVSVESKQ) are disordered. Over residues 351–362 (PQITYVSVESKQ) the composition is skewed to polar residues.

It belongs to the universal ribosomal protein uL3 family. In terms of assembly, part of the 50S ribosomal subunit. Forms a cluster with proteins L14 and L24e.

Functionally, one of the primary rRNA binding proteins, it binds directly near the 3'-end of the 23S rRNA, where it nucleates assembly of the 50S subunit. The protein is Large ribosomal subunit protein uL3 of Pyrococcus horikoshii (strain ATCC 700860 / DSM 12428 / JCM 9974 / NBRC 100139 / OT-3).